Here is a 457-residue protein sequence, read N- to C-terminus: MALSEDTIKAVEATAGLIAAQGIEFTRAFYERMLTKNEELKDVFNLAHQRTLRQPKALLDSLVAYALSIRRINELYELKGKDLPWTGHLAELQGFFSVAERVANKHTSVGIQPAQYQIVGAHLLATIEDRVTKDRAVLAAWGKAYEFLADLLIKREEEIYAETEGSEGGWRQTRTFRVEEKARVNEVICRFRLVPAKGGASVVQHKPGQYLAIFVRNPELFQHQQIRQYSIMSAPNSAYYEIAVHKDGAGTVSRYLHDHVDTGDLLEVAPPYGDFFLRYLEAGEQAAADTQASSEFQVLQGRAVNFAAEKTAPIVLISGGIGQTPLLSMLRFLAQKEGRETARPIFWIHAAHDSRVRAFKEEVDAIREAALPSLRVVTFLSEVRATDREGEDYDFAGRINLDRIPELARLEAGHANPHYFFVGPTGFMTAVEEQLRARSVPDDRIHFEMFGPFKASH.

The Globin domain maps to alanine 2–glutamate 157. Histidine 106 provides a ligand contact to heme b. Catalysis depends on charge relay system residues tyrosine 116 and glutamate 156. The segment at glycine 168–serine 456 is reductase. An FAD-binding FR-type domain is found at arginine 171–arginine 278. Residues tyrosine 210 and arginine 227 to serine 230 contribute to the FAD site. Glycine 320–proline 325 is an NADP(+) binding site. Methionine 449–proline 452 provides a ligand contact to FAD.

This sequence belongs to the globin family. Two-domain flavohemoproteins subfamily. The protein in the C-terminal section; belongs to the flavoprotein pyridine nucleotide cytochrome reductase family. In terms of assembly, monomer. Heme b is required as a cofactor. Requires FAD as cofactor.

The catalysed reaction is 2 nitric oxide + NADPH + 2 O2 = 2 nitrate + NADP(+) + H(+). It catalyses the reaction 2 nitric oxide + NADH + 2 O2 = 2 nitrate + NAD(+) + H(+). Functionally, flavohemoprotein involved in nitric oxide (NO) detoxification in an aerobic process, termed nitric oxide dioxygenase (NOD) reaction that utilizes O(2) and NAD(P)H to convert NO to nitrate, which protects the protozoan parasite from various noxious nitrogen compounds. Therefore, plays a central role in the inducible response to nitrosative stress. May also be involved in O(2) detoxification. The protein is Flavohemoprotein-1 (hmpA-1) of Giardia intestinalis (strain P15) (Giardia lamblia).